Consider the following 523-residue polypeptide: GMP synthase [glutamine-hydrolyzing] (523 aa).

The Glutamine amidotransferase type-1 domain maps to 8 to 205; the sequence is KILILDFGSQ…VVGICGCECK (198 aa). Catalysis depends on Cys-85, which acts as the Nucleophile. Residues His-179 and Glu-181 contribute to the active site. The GMPS ATP-PPase domain occupies 206–398; sequence WTAENIIEDA…LGLPAEMLNR (193 aa). Residue 233–239 coordinates ATP; sequence SGGVDSS.

In terms of assembly, homodimer.

It catalyses the reaction XMP + L-glutamine + ATP + H2O = GMP + L-glutamate + AMP + diphosphate + 2 H(+). Its pathway is purine metabolism; GMP biosynthesis; GMP from XMP (L-Gln route): step 1/1. Catalyzes the synthesis of GMP from XMP. The polypeptide is GMP synthase [glutamine-hydrolyzing] (Actinobacillus pleuropneumoniae serotype 3 (strain JL03)).